The following is a 290-amino-acid chain: GTPase Era (290 aa).

The region spanning 2–169 (KSGFAAILGR…KNKIYENFSE (168 aa)) is the Era-type G domain. The interval 10 to 17 (GRPSTGKS) is G1. 10–17 (GRPSTGKS) contributes to the GTP binding site. Positions 36 to 40 (QTTRN) are G2. The interval 57–60 (DTPG) is G3. GTP is bound by residues 57-61 (DTPGF) and 119-122 (NKVD). The segment at 119–122 (NKVD) is G4. Residues 148–150 (ISA) are G5. The KH type-2 domain occupies 200 to 276 (LKEELPYSLY…NLFLQVKLKK (77 aa)).

The protein belongs to the TRAFAC class TrmE-Era-EngA-EngB-Septin-like GTPase superfamily. Era GTPase family. In terms of assembly, monomer.

The protein localises to the cytoplasm. Its subcellular location is the cell inner membrane. Functionally, an essential GTPase that binds both GDP and GTP, with rapid nucleotide exchange. Plays a role in 16S rRNA processing and 30S ribosomal subunit biogenesis and possibly also in cell cycle regulation and energy metabolism. The polypeptide is GTPase Era (Borrelia garinii subsp. bavariensis (strain ATCC BAA-2496 / DSM 23469 / PBi) (Borreliella bavariensis)).